The chain runs to 79 residues: Small ribosomal subunit protein bS16c (79 aa).

This sequence belongs to the bacterial ribosomal protein bS16 family.

Its subcellular location is the plastid. The protein resides in the chloroplast. The protein is Small ribosomal subunit protein bS16c of Thalassiosira pseudonana (Marine diatom).